A 137-amino-acid chain; its full sequence is Transcription antitermination protein NusB (137 aa).

It belongs to the NusB family.

Functionally, involved in transcription antitermination. Required for transcription of ribosomal RNA (rRNA) genes. Binds specifically to the boxA antiterminator sequence of the ribosomal RNA (rrn) operons. The protein is Transcription antitermination protein NusB of Actinobacillus pleuropneumoniae serotype 5b (strain L20).